Here is a 471-residue protein sequence, read N- to C-terminus: Anthocyanidin 3-O-glucosyltransferase (471 aa).

His24 serves as the catalytic Proton acceptor. His24 contributes to the an anthocyanidin binding site. Catalysis depends on Asp130, which acts as the Charge relay. Position 152 (Thr152) interacts with UDP-alpha-D-glucose. His161 serves as a coordination point for an anthocyanidin. UDP-alpha-D-glucose-binding residues include Ala352, Gln354, His369, Trp372, Ser374, and Glu377. Gly392 contacts an anthocyanidin. Positions 393 and 394 each coordinate UDP-alpha-D-glucose.

The protein belongs to the UDP-glycosyltransferase family.

The enzyme catalyses an anthocyanidin + UDP-alpha-D-glucose + H(+) = an anthocyanidin 3-O-beta-D-glucoside + UDP. Its pathway is pigment biosynthesis; anthocyanin biosynthesis. In terms of biological role, in the presence of other necessary color factors, this glycosylation reaction allows the accumulation of anthocyanin pigments. This Zea mays (Maize) protein is Anthocyanidin 3-O-glucosyltransferase (BZ1).